The primary structure comprises 239 residues: RNA-binding protein 38 (239 aa).

The RRM domain occupies 34–111; the sequence is TKIFVGGLPY…RKANVNLAYL (78 aa).

This sequence belongs to the RBM38 family.

It localises to the cytoplasm. The protein localises to the cytosol. Its subcellular location is the nucleus. In terms of biological role, RNA-binding protein that specifically bind the 3'-UTR of CDKN1A transcripts, leading to maintain the stability of CDKN1A transcripts, thereby acting as a mediator of the p53/TP53 family to regulate CDKN1A. CDKN1A is a cyclin-dependent kinase inhibitor transcriptionally regulated by the p53/TP53 family to induce cell cycle arrest. Isoform 1, but not isoform 2, has the ability to induce cell cycle arrest in G1 and maintain the stability of CDKN1A transcripts induced by p53/TP53. Also acts as a mRNA splicing factor. Specifically regulates the expression of FGFR2-IIIb, an epithelial cell-specific isoform of FGFR2. Plays a role in myogenic differentiation. (Microbial infection) Essential factor for the splicing of the pre-mRNAs of human parvovirus B19 (B19V) and for the expression of B19V 11-kDa protein, which enhances viral replication. In Homo sapiens (Human), this protein is RNA-binding protein 38 (RBM38).